Consider the following 243-residue polypeptide: MRRPVIAGNWKMHMTCAQAREFMAAFLPLVADMPNDRDLVLAPPFTALSSMADLCKDSPIALSSQNVHWEGSGAFTGEISPSMLKEHGVTYTIVGHSEPRKYFSESDEQINHRARSSQANGLIPIVCVGETDEQRERGEAERVIRRQIEQGLEGLDADLLVVAYEPIWAIGTGKTCEAAEANRICGLIRSWVGSPDLVIQYGGSVKGGNIDELMGMSDIDGVLVGGASLQPDGFARIANYNVA.

Substrate is bound at residue 9–11 (NWK). The active-site Electrophile is the H96. E165 functions as the Proton acceptor in the catalytic mechanism. Substrate contacts are provided by residues G171, S204, and 225 to 226 (GG).

This sequence belongs to the triosephosphate isomerase family. Homodimer.

It localises to the cytoplasm. It carries out the reaction D-glyceraldehyde 3-phosphate = dihydroxyacetone phosphate. The protein operates within carbohydrate biosynthesis; gluconeogenesis. It functions in the pathway carbohydrate degradation; glycolysis; D-glyceraldehyde 3-phosphate from glycerone phosphate: step 1/1. Its function is as follows. Involved in the gluconeogenesis. Catalyzes stereospecifically the conversion of dihydroxyacetone phosphate (DHAP) to D-glyceraldehyde-3-phosphate (G3P). This is Triosephosphate isomerase from Synechococcus sp. (strain CC9902).